A 639-amino-acid polypeptide reads, in one-letter code: Probable potassium transport system protein Kup 1 (639 aa).

A compositionally biased stretch (polar residues) spans 1–16 (MALANTGSEAEPVEQS). Residues 1-21 (MALANTGSEAEPVEQSSHPEI) are disordered. Helical transmembrane passes span 29 to 49 (LMLGALGVVYGDIGTSPIYAF), 67 to 87 (ILGVLSLIIWSLTIIVTIKYI), 117 to 137 (AVILGIGIVGASLFFGDAVIT), 154 to 174 (PTFQPYVVPLTLVILAVVFAV), 182 to 202 (VGLVFGPVTAVWFLAIGLSGL), 220 to 240 (IVAFLIHSPDVAFVTIGAIFL), 260 to 280 (IVLAWLSIVFPCLLLNYAGQG), 302 to 322 (ALIPMVVLATAATVIASQAVI), 354 to 374 (IYMPRVNLLLALVVMMLVVGF), 383 to 403 (AYGISVTGNMLVTTVLLYVVM), 411 to 431 (LWVAISLTVLFAFIDIGFFAS), and 436 to 456 (VFEGGWASLLVAFTIVLGMWT).

This sequence belongs to the HAK/KUP transporter (TC 2.A.72) family.

Its subcellular location is the cell inner membrane. The enzyme catalyses K(+)(in) + H(+)(in) = K(+)(out) + H(+)(out). In terms of biological role, transport of potassium into the cell. Likely operates as a K(+):H(+) symporter. In Mesorhizobium japonicum (strain LMG 29417 / CECT 9101 / MAFF 303099) (Mesorhizobium loti (strain MAFF 303099)), this protein is Probable potassium transport system protein Kup 1.